The primary structure comprises 380 residues: uncharacterized protein (380 aa).

Positions 111–369 constitute a Peptidase M14 domain; that stretch reads APYSMERHHD…DCLAILAEMI (259 aa). Positions 164, 167, and 257 each coordinate Zn(2+). E333 (proton donor/acceptor) is an active-site residue.

Zn(2+) serves as cofactor.

This is an uncharacterized protein from Zymomonas mobilis subsp. mobilis (strain ATCC 31821 / ZM4 / CP4).